A 720-amino-acid chain; its full sequence is Transcriptional regulator EFH1 (720 aa).

Composition is skewed to polar residues over residues 1–15 and 22–35; these read MNGI…NFYN and PSSS…SSQD. 4 disordered regions span residues 1-111, 181-223, 245-336, and 365-437; these read MNGI…SSST, SFQM…HQSQ, QKEF…TIAT, and YQRQ…PQPD. The span at 71 to 105 shows a compositional bias: low complexity; it reads QQNQSESQQSRQSHHLQQQQQQQQQQQQNQHNQQN. A compositionally biased stretch (polar residues) spans 181–200; the sequence is SFQMGSVSTPDTQNSSIRSK. Residues 201-223 show a composition bias toward low complexity; that stretch reads QQQQHSYQQQQPQQLSQSQHQSQ. Positions 254 to 266 are enriched in polar residues; the sequence is GDQTLVPQTNSKL. A compositionally biased stretch (low complexity) spans 267 to 304; that stretch reads QQQISETSYSQQQQQQQSPPTPQKQQQQQHYQHQTTQP. Residues 313 to 336 are compositionally biased toward polar residues; sequence YSQTGGPSSSPVAGNISIPTTIAT. Low complexity predominate over residues 366–399; it reads QRQQQQQQQHQQPQSQQMSQISQLSQQIPPQGSS. The segment covering 400–413 has biased composition (polar residues); it reads KNISINSTPTKSRA. The segment covering 414–433 has biased composition (low complexity); sequence SSITTRSGRQSRSTSISSFI. In terms of domain architecture, HTH APSES-type spans 446-552; it reads KVATTRWDDE…KNIKQYFLTK (107 aa). Residues 480–501 constitute a DNA-binding region (H-T-H motif); it reads GTKLLNVIGMTRGKRDGILKTE. The span at 569–582 shows a compositional bias: basic and acidic residues; that stretch reads GMTRQREEVRREGR. Positions 569–662 are disordered; that stretch reads GMTRQREEVR…KNSESKLLET (94 aa). Residues 613 to 644 are compositionally biased toward acidic residues; it reads VPGDDEEEEDDDDDDDDDEEEGEQDDEEEEDG. Low complexity predominate over residues 645–654; sequence SSTSMSSSKN.

This sequence belongs to the EFG1/PHD1/stuA family.

It localises to the nucleus. In terms of biological role, transcription factor that regulates filamentous growth through repression of EFG1. Regulates the level of colonizing fungi, favoring commensalism as opposed to candidiasis. The protein is Transcriptional regulator EFH1 (EFH1) of Candida albicans (strain SC5314 / ATCC MYA-2876) (Yeast).